A 156-amino-acid chain; its full sequence is Snaclec A11 (156 aa).

Positions 1–23 (MGRSISVSFGLLVVFLSLSGTGA) are cleaved as a signal peptide. Intrachain disulfides connect Cys27/Cys38, Cys55/Cys154, and Cys129/Cys146. Positions 34 to 155 (YDQHCYQAVD…CGQPYRFTCE (122 aa)) constitute a C-type lectin domain.

The protein belongs to the snaclec family. Heterodimer; disulfide-linked. In terms of tissue distribution, expressed by the venom gland.

It localises to the secreted. Interferes with one step of hemostasis (modulation of platelet aggregation, or coagulation cascade, for example). This is Snaclec A11 from Macrovipera lebetinus (Levantine viper).